The following is a 528-amino-acid chain: Cytochrome P450 1A5 (528 aa).

Cysteine 467 contacts heme.

This sequence belongs to the cytochrome P450 family. The cofactor is heme.

The protein resides in the endoplasmic reticulum membrane. The protein localises to the microsome membrane. It carries out the reaction an organic molecule + reduced [NADPH--hemoprotein reductase] + O2 = an alcohol + oxidized [NADPH--hemoprotein reductase] + H2O + H(+). In terms of biological role, cytochromes P450 are a group of heme-thiolate monooxygenases. In liver microsomes, this enzyme is involved in an NADPH-dependent electron transport pathway. It oxidizes a variety of structurally unrelated compounds, including steroids, fatty acids, and xenobiotics. This chain is Cytochrome P450 1A5 (CYP1A5), found in Gallus gallus (Chicken).